The following is a 321-amino-acid chain: Ferredoxin--NADP reductase (321 aa).

FAD is bound by residues glutamate 33, glutamine 41, tyrosine 46, valine 86, leucine 119, aspartate 277, and serine 318.

It belongs to the ferredoxin--NADP reductase type 2 family. Homodimer. Requires FAD as cofactor.

The catalysed reaction is 2 reduced [2Fe-2S]-[ferredoxin] + NADP(+) + H(+) = 2 oxidized [2Fe-2S]-[ferredoxin] + NADPH. The sequence is that of Ferredoxin--NADP reductase from Lactococcus lactis subsp. cremoris (strain SK11).